The primary structure comprises 727 residues: AN1-type zinc finger protein 4 (727 aa).

One can recognise a Ubiquitin-like domain in the interval 28–103 (MELFIETLTG…LKLVLAMRGG (76 aa)). Disordered regions lie at residues 187 to 217 (HRMS…IIEN) and 238 to 264 (KKPK…TAPS). A compositionally biased stretch (basic residues) spans 238–248 (KKPKKAVKIKP). The AN1-type zinc-finger motif lies at 661 to 708 (KKTTNHCFLCGKKTGLASSYECRCGNNFCASHRYAETHGCTYDYKSAG). Zn(2+) is bound by residues Cys-667, Cys-670, Cys-682, Cys-684, Cys-689, His-692, His-698, and Cys-700.

The chain is AN1-type zinc finger protein 4 (ZFAND4) from Homo sapiens (Human).